We begin with the raw amino-acid sequence, 213 residues long: ATP-dependent Clp protease proteolytic subunit 1 (213 aa).

The active-site Nucleophile is the Ser114. The active site involves His139.

Belongs to the peptidase S14 family. In terms of assembly, fourteen ClpP subunits assemble into 2 heptameric rings which stack back to back to give a disk-like structure with a central cavity, resembling the structure of eukaryotic proteasomes.

The protein resides in the cytoplasm. It catalyses the reaction Hydrolysis of proteins to small peptides in the presence of ATP and magnesium. alpha-casein is the usual test substrate. In the absence of ATP, only oligopeptides shorter than five residues are hydrolyzed (such as succinyl-Leu-Tyr-|-NHMec, and Leu-Tyr-Leu-|-Tyr-Trp, in which cleavage of the -Tyr-|-Leu- and -Tyr-|-Trp bonds also occurs).. Cleaves peptides in various proteins in a process that requires ATP hydrolysis. Has a chymotrypsin-like activity. Plays a major role in the degradation of misfolded proteins. The sequence is that of ATP-dependent Clp protease proteolytic subunit 1 from Pseudomonas aeruginosa (strain ATCC 15692 / DSM 22644 / CIP 104116 / JCM 14847 / LMG 12228 / 1C / PRS 101 / PAO1).